Reading from the N-terminus, the 125-residue chain is Aspartate 1-decarboxylase (125 aa).

The active-site Schiff-base intermediate with substrate; via pyruvic acid is the serine 25. A Pyruvic acid (Ser) modification is found at serine 25. Threonine 57 serves as a coordination point for substrate. The Proton donor role is filled by tyrosine 58. A substrate-binding site is contributed by 73-75 (GAA).

It belongs to the PanD family. In terms of assembly, heterooctamer of four alpha and four beta subunits. Pyruvate serves as cofactor. In terms of processing, is synthesized initially as an inactive proenzyme, which is activated by self-cleavage at a specific serine bond to produce a beta-subunit with a hydroxyl group at its C-terminus and an alpha-subunit with a pyruvoyl group at its N-terminus.

It is found in the cytoplasm. The catalysed reaction is L-aspartate + H(+) = beta-alanine + CO2. It participates in cofactor biosynthesis; (R)-pantothenate biosynthesis; beta-alanine from L-aspartate: step 1/1. Its function is as follows. Catalyzes the pyruvoyl-dependent decarboxylation of aspartate to produce beta-alanine. In Herpetosiphon aurantiacus (strain ATCC 23779 / DSM 785 / 114-95), this protein is Aspartate 1-decarboxylase.